We begin with the raw amino-acid sequence, 403 residues long: MTPLLRFLNRTSLVTQIVIGLLAGIALALLAPAIARDLAFLGKVFVSALKAVAPVLVFILVMASVANHRHGQETHIRPILWLYLLGTFAAAVVAVVASMLFPSHLALSTSEASLSAPGGITEVLQNLLLSAVDNPVNALLNANFIGVLTWAIGLGVALRHAGETTRTVVEDLSTGVTLIVRVVIRFAPLGIFGLVSSTLAQSGLDALLGYLHLLAVLIGCMLFVALVMNPLIVFWKIRRNPYPLTLLCLRESGITAFFTRSSAANIPVNLALSERLGLHEDTYSVSIPLGATINMAGAAITITVLTLAAVHTLGIQVDLPTAVLLSVVAAVCACGASGVAGGSLLLIPLACSLFGIPSEIAMQVVAVGFIIGVLQDSAETALNSSTDVLFTAAACQAKEQRNG.

A run of 9 helical transmembrane segments spans residues 14 to 34 (VTQIVIGLLAGIALALLAPAI), 44 to 64 (VFVSALKAVAPVLVFILVMAS), 79 to 99 (ILWLYLLGTFAAAVVAVVASM), 138 to 158 (ALLNANFIGVLTWAIGLGVAL), 175 to 195 (GVTLIVRVVIRFAPLGIFGLV), 214 to 234 (LAVLIGCMLFVALVMNPLIVF), 295 to 315 (MAGAAITITVLTLAAVHTLGI), 327 to 347 (VVAAVCACGASGVAGGSLLLI), and 353 to 373 (LFGIPSEIAMQVVAVGFIIGV).

It belongs to the dicarboxylate/amino acid:cation symporter (DAACS) (TC 2.A.23) family.

It localises to the cell inner membrane. The catalysed reaction is L-serine(in) + Na(+)(in) = L-serine(out) + Na(+)(out). It carries out the reaction L-threonine(in) + Na(+)(in) = L-threonine(out) + Na(+)(out). In terms of biological role, involved in the import of serine and threonine into the cell, with the concomitant import of sodium (symport system). In Pseudomonas putida (strain ATCC 700007 / DSM 6899 / JCM 31910 / BCRC 17059 / LMG 24140 / F1), this protein is Serine/threonine transporter SstT.